Reading from the N-terminus, the 415-residue chain is SVF1-like protein YDR222W (415 aa).

The protein belongs to the SVF1 family.

It localises to the cytoplasm. This chain is SVF1-like protein YDR222W, found in Saccharomyces cerevisiae (strain ATCC 204508 / S288c) (Baker's yeast).